The chain runs to 473 residues: MTNNDKEKQPLLSSINNEDDNGATINIVEPVPWYSNIPQKIKNSMSKETITILIYVVLYVTSGVINSVLLKKVMNKFTNYAFFLSQLTNFGYVPIFGAVTAYKIFFTKDIPQETRDFPTRKFAIMGALDAITGFFVVIGGVSTSGPLQQLLNQAIIPFTMIASFIFLKERYSLIQLGGALVIIGGVVTSLIPSLLGGSSGGNKPFWNFFYLLSVIPGALSNVYKDIGFQAVADMDVWYLQYWDSLYQSIFGLFLFPVNNWLPPPATVKFEQILPFMKEGAECLAGINSIIPSYINGTSSFTATSCTYAPDATITCDDCHNAWIVIILYMTINIIYNIFILLVLKHAGATVYSIANTLRLPLTNIVFSIHFIMGSAVSPFSGLSVAGLVIILVGLGGYRVGSMIKQKKAAAAGGAIKVIPSYGPAGMDNIIPVQKEYIEPKSQAHLRNQFFGKLGINVPEARYRAANNNNYGDA.

Over 1–49 the chain is Cytoplasmic; it reads MTNNDKEKQPLLSSINNEDDNGATINIVEPVPWYSNIPQKIKNSMSKET. Residues 50 to 70 traverse the membrane as a helical segment; the sequence is ITILIYVVLYVTSGVINSVLL. Residues 71–80 lie on the Vacuolar side of the membrane; the sequence is KKVMNKFTNY. A helical transmembrane segment spans residues 81–101; sequence AFFLSQLTNFGYVPIFGAVTA. The Cytoplasmic segment spans residues 102–121; sequence YKIFFTKDIPQETRDFPTRK. The helical transmembrane segment at 122–142 threads the bilayer; that stretch reads FAIMGALDAITGFFVVIGGVS. Over 143-146 the chain is Vacuolar; sequence TSGP. The helical transmembrane segment at 147-167 threads the bilayer; the sequence is LQQLLNQAIIPFTMIASFIFL. Residues 168–175 are Cytoplasmic-facing; it reads KERYSLIQ. The chain crosses the membrane as a helical span at residues 176-196; it reads LGGALVIIGGVVTSLIPSLLG. Residues 197 to 207 are Vacuolar-facing; it reads GSSGGNKPFWN. Residues 208-228 form a helical membrane-spanning segment; sequence FFYLLSVIPGALSNVYKDIGF. The Cytoplasmic portion of the chain corresponds to 229-248; the sequence is QAVADMDVWYLQYWDSLYQS. Residues 249 to 269 traverse the membrane as a helical segment; that stretch reads IFGLFLFPVNNWLPPPATVKF. Over 270-322 the chain is Vacuolar; it reads EQILPFMKEGAECLAGINSIIPSYINGTSSFTATSCTYAPDATITCDDCHNAW. An N-linked (GlcNAc...) asparagine glycan is attached at Asn-295. A helical membrane pass occupies residues 323-343; that stretch reads IVIILYMTINIIYNIFILLVL. Residues 344 to 352 lie on the Cytoplasmic side of the membrane; it reads KHAGATVYS. The helical transmembrane segment at 353–373 threads the bilayer; that stretch reads IANTLRLPLTNIVFSIHFIMG. Residue Ser-374 is a topological domain, vacuolar. A helical transmembrane segment spans residues 375 to 395; that stretch reads AVSPFSGLSVAGLVIILVGLG. Residues 396 to 473 lie on the Cytoplasmic side of the membrane; the sequence is GYRVGSMIKQ…AANNNNYGDA (78 aa).

The protein belongs to the CRT-like transporter family.

The protein resides in the vacuole membrane. In terms of biological role, nutrient transporter. Involved in maintaining the osmotic homeostasis of the digestive vacuole. The chain is Crt homolog 1 (crtp1) from Dictyostelium discoideum (Social amoeba).